A 242-amino-acid polypeptide reads, in one-letter code: Small ribosomal subunit protein uS2 (242 aa).

This sequence belongs to the universal ribosomal protein uS2 family.

This is Small ribosomal subunit protein uS2 from Vibrio campbellii (strain ATCC BAA-1116).